The following is a 931-amino-acid chain: Phosphoenolpyruvate carboxylase (931 aa).

Residues histidine 158 and lysine 593 contribute to the active site.

Belongs to the PEPCase type 1 family. The cofactor is Mg(2+).

It carries out the reaction oxaloacetate + phosphate = phosphoenolpyruvate + hydrogencarbonate. Forms oxaloacetate, a four-carbon dicarboxylic acid source for the tricarboxylic acid cycle. This chain is Phosphoenolpyruvate carboxylase, found in Azorhizobium caulinodans (strain ATCC 43989 / DSM 5975 / JCM 20966 / LMG 6465 / NBRC 14845 / NCIMB 13405 / ORS 571).